Here is a 218-residue protein sequence, read N- to C-terminus: Ribose-5-phosphate isomerase A (218 aa).

Substrate-binding positions include 28-31 (TGST), 81-84 (DGAD), and 94-97 (KGGG). Residue Glu103 is the Proton acceptor of the active site. Lys121 is a substrate binding site.

This sequence belongs to the ribose 5-phosphate isomerase family. In terms of assembly, homodimer.

The enzyme catalyses aldehydo-D-ribose 5-phosphate = D-ribulose 5-phosphate. Its pathway is carbohydrate degradation; pentose phosphate pathway; D-ribose 5-phosphate from D-ribulose 5-phosphate (non-oxidative stage): step 1/1. Functionally, catalyzes the reversible conversion of ribose-5-phosphate to ribulose 5-phosphate. The protein is Ribose-5-phosphate isomerase A of Vibrio parahaemolyticus serotype O3:K6 (strain RIMD 2210633).